A 512-amino-acid chain; its full sequence is Protein disulfide-isomerase (512 aa).

The first 24 residues, 1-24 (MAKNVAIFGLLFSLLLLVPSQIFA), serve as a signal peptide directing secretion. A Thioredoxin 1 domain is found at 25–144 (EESSTDAKEF…IVEYLKKQSG (120 aa)). Catalysis depends on nucleophile residues Cys-62 and Cys-65. Cys-62 and Cys-65 are joined by a disulfide. Asn-278 carries an N-linked (GlcNAc...) asparagine glycan. Residues 357 to 485 (YKDGKVEPFV…IIEFIEKNKD (129 aa)) enclose the Thioredoxin 2 domain. Catalysis depends on nucleophile residues Cys-407 and Cys-410. An intrachain disulfide couples Cys-407 to Cys-410. Residues 487–496 (TGAAHQEVEQ) are compositionally biased toward basic and acidic residues. Residues 487–512 (TGAAHQEVEQPKAAAQPEAEQPKDEL) form a disordered region. A Prevents secretion from ER motif is present at residues 509–512 (KDEL).

This sequence belongs to the protein disulfide isomerase family.

It localises to the endoplasmic reticulum lumen. It catalyses the reaction Catalyzes the rearrangement of -S-S- bonds in proteins.. Functionally, participates in the folding of proteins containing disulfide bonds, may be involved in glycosylation, prolyl hydroxylation and triglyceride transfer. The polypeptide is Protein disulfide-isomerase (PDI) (Medicago sativa (Alfalfa)).